A 9904-amino-acid polypeptide reads, in one-letter code: Extracellular matrix-binding protein ebh (9904 aa).

Positions 1–39 are cleaved as a signal peptide; it reads MNYRDKIQKFSIRKYTVGTFSTVIATLVFLGFNTSQAHA. Positions 41–59 are enriched in polar residues; the sequence is ETNQPASVVKQKQQSNNEQ. Disordered regions lie at residues 41–153 and 250–277; these read ETNQ…NDNR and PQRQ…PRSV. Low complexity predominate over residues 65–78; sequence SQVQNSQNSQNSQS. Residues 79 to 117 are compositionally biased toward polar residues; that stretch reads LSATHENEQPNISQANLVDQKVAQSSTTNDEQPASQNVN. A compositionally biased stretch (basic and acidic residues) spans 130–140; that stretch reads PDKEEGKHKQN. Polar residues-rich tracts occupy residues 141 to 151 and 250 to 266; these read ESQSANKNGND and PQRQ…QTRS. FIVAR domains lie at 2524 to 2580, 2610 to 2666, 2687 to 2750, 2780 to 2836, 2864 to 2919, 2947 to 3002, 3030 to 3085, 3154 to 3212, 3280 to 3339, 3407 to 3465, 3533 to 3591, 3659 to 3717, 3785 to 3843, 3911 to 3969, 4037 to 4095, 4160 to 4208, 4276 to 4334, 4402 to 4460, 4528 to 4586, 4654 to 4712, 4780 to 4838, 4906 to 4964, 5032 to 5090, 5158 to 5216, 5284 to 5342, 5410 to 5468, 5536 to 5593, 5661 to 5719, 5787 to 5845, 5913 to 5971, 6039 to 6097, 6175 to 6223, 6291 to 6349, 6417 to 6475, 6543 to 6601, 6669 to 6727, 6795 to 6853, 6921 to 6979, 7047 to 7105, 7173 to 7231, 7299 to 7357, 7425 to 7486, 7551 to 7609, 7677 to 7735, 7803 to 7860, 7928 to 7986, 8054 to 8112, 8180 to 8238, 8306 to 8364, 8432 to 8490, 8558 to 8612, 8680 to 8739, and 8934 to 8990; these read AKNH…VSDA, SKNN…ISEE, DTHT…VQTA, AKTK…IAEE, AKTQ…IRQN, AKNQ…INTN, AKTQ…INDK, AMTK…VNQK, AMTG…VNNA, AMGN…VNRA, AMGN…VTEA, AMNT…ITQK, AMAS…VEAA, AMGN…VEQA, AMGT…VTAA, DKDA…VDNA, AMGA…INGM, AMTA…VNSA, AMKG…ITQA, AMHS…VEQA, AMGQ…VERA, AMTA…VTNA, AMKG…INQA, AMTN…VESA, AMSN…VEQA, AMNQ…INQK, AMGN…VQAA, AMGQ…VEAA, AMQR…VEQA, AMDQ…VTAA, AMNQ…VTQA, DKDQ…VEAA, AMGN…VEAA, AMDK…INQA, AMTQ…ITAA, AMTQ…IQQA, AMTN…VEQA, AMTQ…VAQA, AMGT…VTQA, AMGN…ITRA, AMDQ…ITNE, AMEL…VNGA, AMHG…INQA, LMDA…VSSA, AIKA…IDQA, AMEA…VEQL, AMQA…VEQL, AMET…VEQA, SMDQ…VDQA, AMDQ…VIKL, and AMET…INGA. A helical membrane pass occupies residues 9710–9730; sequence IKNAIGVVGISGLLASFWFFI. The disordered stretch occupies residues 9807–9904; that stretch reads RRKEDEEDVE…KKKKSKKNKK (98 aa). Basic and acidic residues-rich tracts occupy residues 9822–9832 and 9871–9881; these read TDEKVLKDNEH and QKDNQSKDKKS. A compositionally biased stretch (basic residues) spans 9886-9904; it reads TSKKVAAKKKKKKSKKNKK.

It is found in the cell membrane. The polypeptide is Extracellular matrix-binding protein ebh (ebh) (Staphylococcus aureus (strain MW2)).